The chain runs to 848 residues: DIS3-like exonuclease 2 (848 aa).

The segment at 153–173 (KGDRNSGKTDNNSPNKTEKRC) is disordered. Residues aspartate 345 and aspartate 354 each contribute to the Mg(2+) site.

Belongs to the RNR ribonuclease family. DIS3L2 subfamily. Mg(2+) is required as a cofactor. Requires Mn(2+) as cofactor. Cleaved by caspase ced-3 in vitro.

It is found in the cytoplasm. Its subcellular location is the P-body. 3'-5'-exoribonuclease that specifically recognizes RNAs polyuridylated at their 3' end and mediates their degradation. Component of an exosome-independent RNA degradation pathway that mediates degradation of cytoplasmic mRNAs that have been deadenylated and subsequently uridylated at their 3'. This chain is DIS3-like exonuclease 2, found in Caenorhabditis elegans.